Reading from the N-terminus, the 205-residue chain is Large ribosomal subunit protein uL18 (205 aa).

It belongs to the universal ribosomal protein uL18 family. Part of the 50S ribosomal subunit. Contacts the 5S and 23S rRNAs.

Its function is as follows. This is one of the proteins that bind and probably mediate the attachment of the 5S RNA into the large ribosomal subunit, where it forms part of the central protuberance. The chain is Large ribosomal subunit protein uL18 from Haloquadratum walsbyi (strain DSM 16790 / HBSQ001).